Consider the following 354-residue polypeptide: Methionine import ATP-binding protein MetN (354 aa).

Residues 8-250 (LDHIDITFRQ…PKEALTQKFI (243 aa)) enclose the ABC transporter domain. 42–49 (GYSGAGKS) provides a ligand contact to ATP.

Belongs to the ABC transporter superfamily. Methionine importer (TC 3.A.1.24) family. The complex is composed of two ATP-binding proteins (MetN), two transmembrane proteins (MetI) and a solute-binding protein (MetQ).

It localises to the cell membrane. The catalysed reaction is L-methionine(out) + ATP + H2O = L-methionine(in) + ADP + phosphate + H(+). The enzyme catalyses D-methionine(out) + ATP + H2O = D-methionine(in) + ADP + phosphate + H(+). Functionally, part of the ABC transporter complex MetNIQ involved in methionine import. Responsible for energy coupling to the transport system. This is Methionine import ATP-binding protein MetN from Streptococcus pyogenes serotype M18 (strain MGAS8232).